The following is a 394-amino-acid chain: Phosphoglycerate kinase (394 aa).

Residues 21-23 (DFN), R36, 59-62 (HLGR), R118, and R151 contribute to the substrate site. Position 183 is a phosphoserine (S183). ATP is bound by residues K201 and G292. T299 carries the phosphothreonine modification. ATP-binding positions include E323 and 350–353 (GGDS).

The protein belongs to the phosphoglycerate kinase family. Monomer.

The protein resides in the cytoplasm. It carries out the reaction (2R)-3-phosphoglycerate + ATP = (2R)-3-phospho-glyceroyl phosphate + ADP. It participates in carbohydrate degradation; glycolysis; pyruvate from D-glyceraldehyde 3-phosphate: step 2/5. This chain is Phosphoglycerate kinase, found in Bacillus thuringiensis (strain Al Hakam).